We begin with the raw amino-acid sequence, 600 residues long: Proline--tRNA ligase (600 aa).

Belongs to the class-II aminoacyl-tRNA synthetase family. ProS type 1 subfamily. Homodimer.

The protein localises to the cytoplasm. It catalyses the reaction tRNA(Pro) + L-proline + ATP = L-prolyl-tRNA(Pro) + AMP + diphosphate. Catalyzes the attachment of proline to tRNA(Pro) in a two-step reaction: proline is first activated by ATP to form Pro-AMP and then transferred to the acceptor end of tRNA(Pro). As ProRS can inadvertently accommodate and process non-cognate amino acids such as alanine and cysteine, to avoid such errors it has two additional distinct editing activities against alanine. One activity is designated as 'pretransfer' editing and involves the tRNA(Pro)-independent hydrolysis of activated Ala-AMP. The other activity is designated 'posttransfer' editing and involves deacylation of mischarged Ala-tRNA(Pro). The misacylated Cys-tRNA(Pro) is not edited by ProRS. The chain is Proline--tRNA ligase from Synechococcus sp. (strain RCC307).